The sequence spans 375 residues: Secreted LysM effector Vd4LysM (375 aa).

A signal peptide spans 1–24 (MPSVTISSTMLAGLLLMLVPASSA). Positions 57–104 (SWWWDNEGQIPCANMPAEWGITMQDFLRWNPSITSSCGNFLNGRSYCV) constitute a LysM 1 domain. The disordered stretch occupies residues 108 to 139 (GEEPPVPGTPTTTTAPATTTKPSNGITTPQPI). Positions 116-129 (TPTTTTAPATTTKP) are enriched in low complexity. Residues 149–195 (KFHYISEGDRCQDILSYQKITLADFFKWNPAVKSDCSGLWSKTNACV) enclose the LysM 2 domain. Over residues 206 to 217 (TTTTKPATPTTP) the composition is skewed to low complexity. The tract at residues 206–225 (TTTTKPATPTTPSNGITTPQ) is disordered. The LysM 3 domain occupies 237–283 (KFHYISEGDRCQDILSYQKITQADFFKWNPAVKSDCSGLWSKTHACV). A disordered region spans residues 287 to 317 (GGQAPPPTPTTTKPTTTKPPGNGVTTPTPTQ). Low complexity predominate over residues 296–317 (TTTKPTTTKPPGNGVTTPTPTQ). Residues 326–372 (KFHFVSPGNTCQQIVSYQKITMANFVKWNSGAGSGCNNLWGNTHACV) enclose the LysM 4 domain.

Belongs to the secreted LysM effector family.

Its function is as follows. Might have a role in sequestration of chitin oligosaccharides (breakdown products of fungal cell walls that are released during invasion and act as triggers of host immunity) to dampen host defense. Does not play an important role during host colonization. This Verticillium dahliae (strain VdLs.17 / ATCC MYA-4575 / FGSC 10137) (Verticillium wilt) protein is Secreted LysM effector Vd4LysM.